We begin with the raw amino-acid sequence, 755 residues long: Diamine oxidase [copper-containing] (755 aa).

Positions 1-24 (MGRGTLALGWAGAALLLLQMLAAA) are cleaved as a signal peptide. N-linked (GlcNAc...) asparagine glycosylation is present at asparagine 115. Cysteine 182 and cysteine 186 are disulfide-bonded. Aspartate 376 (proton acceptor) is an active-site residue. A disulfide bond links cysteine 394 and cysteine 420. Tyrosine 464 serves as the catalytic Schiff-base intermediate with substrate; via topaquinone. 2',4',5'-topaquinone is present on tyrosine 464. 2 residues coordinate Cu(2+): histidine 513 and histidine 515. The Ca(2+) site is built by aspartate 522, leucine 523, and aspartate 524. Asparagine 541 is a glycosylation site (N-linked (GlcNAc...) asparagine). 6 residues coordinate Ca(2+): glutamate 565, phenylalanine 656, asparagine 659, glutamate 661, aspartate 667, and leucine 668. Position 678 (histidine 678) interacts with Cu(2+). Asparagine 749 carries an N-linked (GlcNAc...) asparagine glycan.

This sequence belongs to the copper/topaquinone oxidase family. Homodimer; disulfide-linked. Cu(2+) is required as a cofactor. The cofactor is Ca(2+). L-topaquinone serves as cofactor. In terms of processing, topaquinone (TPQ) is generated by copper-dependent autoxidation of a specific tyrosyl residue. N-glycosylated; the glycans are primarily linear, di-, or tribranched fucosylated complex type.

It is found in the secreted. Its subcellular location is the extracellular space. The protein localises to the cell membrane. It carries out the reaction histamine + O2 + H2O = imidazole-4-acetaldehyde + H2O2 + NH4(+). It catalyses the reaction N(tau)-methylhistamine + O2 + H2O = 1-methylimidazole-4-acetaldehyde + H2O2 + NH4(+). The enzyme catalyses putrescine + O2 + H2O = 4-aminobutanal + H2O2 + NH4(+). The catalysed reaction is cadaverine + O2 + H2O = 5-aminopentanal + H2O2 + NH4(+). With respect to regulation, inhibited by amiloride and amiloride analogs. Functionally, catalyzes the oxidative deamination of primary amines to the corresponding aldehydes with the concomitant production of hydrogen peroxide and ammonia. Its preferred substrates in vitro are the diamines histamine and 1-methylhistamine and it could therefore play a role in allergic and immune responses. Has a broad specificity for diamines and can also act on cadaverine and putrescine, two products of amino acid catabolism. It could also act on polyamines, like spermidine and spermine though less efficiently, and regulate various biological processes. In Sus scrofa (Pig), this protein is Diamine oxidase [copper-containing].